Consider the following 311-residue polypeptide: GTP cyclohydrolase MptA (311 aa).

Belongs to the GTP cyclohydrolase IV family. Homodimer. The cofactor is Fe(2+).

The enzyme catalyses GTP + H2O = 7,8-dihydroneopterin 2',3'-cyclic phosphate + formate + diphosphate + H(+). It participates in cofactor biosynthesis; 5,6,7,8-tetrahydromethanopterin biosynthesis. Its function is as follows. Converts GTP to 7,8-dihydro-D-neopterin 2',3'-cyclic phosphate, the first intermediate in the biosynthesis of coenzyme methanopterin. The polypeptide is GTP cyclohydrolase MptA (Halobacterium salinarum (strain ATCC 29341 / DSM 671 / R1)).